Here is a 1105-residue protein sequence, read N- to C-terminus: Serine/threonine-protein kinase 4 homolog B (1105 aa).

Residues 23 to 274 (FDLIECLGRG…AKDLLKHSFF (252 aa)) enclose the Protein kinase domain. Residues 29-37 (LGRGSFGSV) and Lys52 contribute to the ATP site. Asp142 serves as the catalytic Proton acceptor. Disordered stretches follow at residues 348–396 (STQI…TKNN), 411–482 (SSSA…RQPA), and 495–541 (PSFG…SLPL). Low complexity-rich tracts occupy residues 358-396 (QAQQ…TKNN) and 411-437 (SSSA…TTTN). Residues 438–458 (DYHTGNGRTSSSSPQFGLQHQ) are compositionally biased toward polar residues. Low complexity-rich tracts occupy residues 459–473 (NSSN…TVPS) and 513–541 (PIGS…SLPL). The interval 516-1105 (SPITKRPTPT…SEFDLDFYNN (590 aa)) is calpain-like cysteine protease-like. Domain III stretches follow at residues 641 to 668 (EVSA…EGSF), 791 to 830 (VHTQ…QGSI), 836 to 972 (SEQI…NVIQ), and 1076 to 1103 (VVIP…LDFY).

It in the N-terminal section; belongs to the protein kinase superfamily. STE Ser/Thr protein kinase family. STE20 subfamily. In the C-terminal section; belongs to the peptidase C2 family. Mn(2+) serves as cofactor.

The enzyme catalyses L-seryl-[protein] + ATP = O-phospho-L-seryl-[protein] + ADP + H(+). The catalysed reaction is L-threonyl-[protein] + ATP = O-phospho-L-threonyl-[protein] + ADP + H(+). Functionally, probable serine/threonine-protein kinase. The sequence is that of Serine/threonine-protein kinase 4 homolog B (krsB) from Dictyostelium discoideum (Social amoeba).